A 141-amino-acid chain; its full sequence is Hemoglobin subunit alpha-D (141 aa).

The Globin domain occupies 1–141; that stretch reads VLTAEDRRLL…VADVLSEKYR (141 aa). 2 residues coordinate heme b: His-57 and His-87.

This sequence belongs to the globin family. In terms of assembly, the deoxy-Hb is a heterotetramer of two alpha and two beta chains, but oxygenation results in dissociation to dimers. As to expression, red blood cells.

Functionally, involved in oxygen transport from the lung to the various peripheral tissues. This Erythrolamprus miliaris (South American water snake) protein is Hemoglobin subunit alpha-D (HBAD).